Consider the following 170-residue polypeptide: Viral interleukin-10 homolog (170 aa).

The N-terminal stretch at 1-23 (MERRLVVTLQCLVLLYLAPECGG) is a signal peptide. 2 cysteine pairs are disulfide-bonded: C27–C119 and C73–C125. Residues 97–145 (EAKDHVNSLGENLKTLRLRLRRCHRFLPCENKSKAVEQIKNAFNKLQEK) adopt a coiled-coil conformation. An N-linked (GlcNAc...) asparagine; by host glycan is attached at N127.

The protein belongs to the IL-10 family. As to quaternary structure, homodimer.

Its subcellular location is the secreted. Inhibits IFN-gamma synthesis. Down-regulates the expression of the host TAP1 gene (transporter associated with antigen processing), thereby affecting the transport of peptides into the endoplasmic reticulum and subsequent peptide loading by MHC class I molecules. In consequence, infected cells are masked for immune recognition by cytotoxic T-lymphocytes. The sequence is that of Viral interleukin-10 homolog from Epstein-Barr virus (strain AG876) (HHV-4).